A 366-amino-acid chain; its full sequence is Mitochondrial substrate carrier family protein H (366 aa).

Over residues 1–25 the composition is skewed to low complexity; that stretch reads MLSNSVNNNNNNNNINNSNSNNNDS. A disordered region spans residues 1 to 26; sequence MLSNSVNNNNNNNNINNSNSNNNDSN. 3 Solcar repeats span residues 29-121, 132-243, and 259-360; these read KNVK…LKEY, NIYT…LKNK, and SPFF…IKQS. Helical transmembrane passes span 35 to 55, 96 to 112, 133 to 151, 175 to 192, 262 to 282, and 340 to 357; these read MVASIFGGIMSSLIVTPLDVV, GVTPSLLMTIPSATIYF, IYTVPLVAGTLARIFSASV, VAMAASSSTATIGTIPLS, FINFIAGATSGTLAAVLTTPI, and VAKVSPACAIMISTFEYI.

This sequence belongs to the mitochondrial carrier (TC 2.A.29) family.

It is found in the mitochondrion inner membrane. Its function is as follows. Mitochondrial transporter required for glutathione import into mitochondria. This chain is Mitochondrial substrate carrier family protein H, found in Dictyostelium discoideum (Social amoeba).